The chain runs to 550 residues: Tyrosine-protein phosphatase 1 (550 aa).

Residues Leu260–Leu539 form the Tyrosine-protein phosphatase domain. A phosphoserine mark is found at Ser318 and Ser320. Cys470 (phosphocysteine intermediate) is an active-site residue.

It belongs to the protein-tyrosine phosphatase family. Non-receptor class subfamily.

It localises to the cytoplasm. It catalyses the reaction O-phospho-L-tyrosyl-[protein] + H2O = L-tyrosyl-[protein] + phosphate. Its function is as follows. Plays a role in inhibiting the onset of mitosis. Dephosphorylates sty1/spc1 and wis1/spc2/sty2. This Schizosaccharomyces pombe (strain 972 / ATCC 24843) (Fission yeast) protein is Tyrosine-protein phosphatase 1 (pyp1).